The chain runs to 1138 residues: Tyrosine-protein kinase receptor Tie-1 (1138 aa).

An N-terminal signal peptide occupies residues 1–21; that stretch reads MVWRVPPFLLPILFLASHVGA. Residues 22–759 are Extracellular-facing; the sequence is AVDLTLLANL…SRAAEEGLDQ (738 aa). An Ig-like C2-type 1 domain is found at 43–105; that stretch reads CVSGEAGAGR…PSDLVGVFSC (63 aa). 2 N-linked (GlcNAc...) asparagine glycosylation sites follow: N83 and N161. EGF-like domains follow at residues 214-256, 258-303, and 305-345; these read GCGA…TRCE, ACRE…SQCQ, and ACAP…VHCE. Intrachain disulfides connect C228–C237, C231–C244, and C246–C255. Intrachain disulfides connect C315–C327, C321–C333, and C335–C344. One can recognise an Ig-like C2-type 2 domain in the interval 372–426; it reads CAAAGNPFPVRGSIELRKPDGTVLLSTKAIVEPEKTTAEFEVPRLVLADSGFWEC. 3 consecutive Fibronectin type-III domains span residues 446 to 545, 548 to 642, and 646 to 739; these read PPVP…CPEP, QPWL…LPPS, and APRH…TLGN. Residues N503, N596, and N709 are each glycosylated (N-linked (GlcNAc...) asparagine). The helical transmembrane segment at 760 to 784 threads the bilayer; that stretch reads QLILAVVGSVSATCLTILAALLTLV. The Cytoplasmic segment spans residues 785-1138; that stretch reads CIRRSCLHRR…AGIDATAEEA (354 aa). One can recognise a Protein kinase domain in the interval 839 to 1118; the sequence is ITFEDLIGEG…RMLEARKAYV (280 aa). ATP is bound by residues 845–853 and K870; that span reads IGEGNFGQV. The active-site Proton acceptor is D979. The residue at position 1007 (Y1007) is a Phosphotyrosine; by autocatalysis.

Belongs to the protein kinase superfamily. Tyr protein kinase family. Tie subfamily. In terms of assembly, heterodimer with TEK/TIE2. Interacts with SVEP1 (via C-terminus). In terms of processing, phosphorylated on tyrosine residues in response to ANGPT1, most likely by TEK/TIE2. Specifically expressed in developing vascular endothelial cells.

It localises to the cell membrane. It carries out the reaction L-tyrosyl-[protein] + ATP = O-phospho-L-tyrosyl-[protein] + ADP + H(+). Transmembrane tyrosine-protein kinase that may modulate TEK/TIE2 activity and contribute to the regulation of angiogenesis. This is Tyrosine-protein kinase receptor Tie-1 (TIE1) from Homo sapiens (Human).